The following is a 463-amino-acid chain: MKSFDEMTPKEIVQELDKYIVGQYEAKKAVAIAVRNRIRRQKLPEEWRKEVLPKNILMIGPTGVGKTEIARRLAQLSGSPFLKVEATRFTEVGYVGKNVDSMIRDLVEISVNMVKQEKIKEVERQAEELVEERILDALVPESKAVPVVTNPFINLITGGQQQQYTPEDRRRFRAKREEMREKLRKGELENEEIEIELEETVSPFMGIFGPGMEDLGIEITNMFSGMLPKQKKKRKMKVSEARKVLLPLEAEKLIDMDKVVQEALDRAQNRGIIFIDEIDKIAGKESAVGPDVSRQGVQRDLLPIVEGTTIMTKYGPVRTDYILFIAAGAFHVSRPSDLIPELQGRFPIRVELSPLTEEDFVRILKEPENAIIKQYQALLSTEGVELVFTEDGIREMARIAYQLNQRLENIGARRLYTVAEKVLEEISFEAPDIPEKRVVVDAEYVRRRLEKIVQDEDLSAYIL.

Residues V21, 63–68 (GVGKTE), D276, E341, and R413 each bind ATP.

This sequence belongs to the ClpX chaperone family. HslU subfamily. In terms of assembly, a double ring-shaped homohexamer of HslV is capped on each side by a ring-shaped HslU homohexamer. The assembly of the HslU/HslV complex is dependent on binding of ATP.

Its subcellular location is the cytoplasm. ATPase subunit of a proteasome-like degradation complex; this subunit has chaperone activity. The binding of ATP and its subsequent hydrolysis by HslU are essential for unfolding of protein substrates subsequently hydrolyzed by HslV. HslU recognizes the N-terminal part of its protein substrates and unfolds these before they are guided to HslV for hydrolysis. In Thermotoga petrophila (strain ATCC BAA-488 / DSM 13995 / JCM 10881 / RKU-1), this protein is ATP-dependent protease ATPase subunit HslU.